The chain runs to 432 residues: uncharacterized protein (432 aa).

Residues 1 to 14 (MSDTTDVPENQKSP) are compositionally biased toward polar residues. The disordered stretch occupies residues 1 to 42 (MSDTTDVPENQKSPKPSGKADKRKIEEKPENSSLKRKKFEDP). Positions 18 to 30 (GKADKRKIEEKPE) are enriched in basic and acidic residues. Positions 85-148 (RKMVEVFSGE…HEHPIRDLPI (64 aa)) constitute an S4 RNA-binding domain. The active site involves Asp199.

This sequence belongs to the pseudouridine synthase RluA family.

This is an uncharacterized protein from Caenorhabditis elegans.